We begin with the raw amino-acid sequence, 439 residues long: MAGAMVSIVGRPNVGKSTLFNKIMGKRISIVEDKPGVTRDRIYGNAEWLDKKFILVDTGGLDPNAEDILFSKVRLQVEAAIDTSDVILFLVDAKEGLMPEDEEIANILRRAKKEVILVCNKVDSFKEMPPTYYDFFSLGLGNPIPISASNGLGIGELLDEVVKRLPQEELEYTEETIKIAVIGKPNVGKSSLVNKILGEERVIVSNIPGTTRDAIDTPFSKDGKNYVLIDTAGIRRKSRISESIERYSVLRALAAIERSDICLLMIDATEGPTEQDTKIAGYAFENGKGIIIVVNKWDAIKKDNNTVNEYTKMVREKLSFISFAPILFISAKTGQRVHRVLETVDKVWEEYNKRITTGLLNNVLNEAILMFPPPADKGKPLKVYYTSQVGIKPPSFVVFVNEPELMHFSYLRFIENTLRQNFGFEGVPIVISTKKRGEN.

EngA-type G domains follow at residues 4–169 (AMVS…PQEE) and 177–352 (IKIA…EEYN). GTP-binding positions include 10 to 17 (GRPNVGKS), 57 to 61 (DTGGL), 120 to 123 (NKVD), 183 to 190 (GKPNVGKS), 230 to 234 (DTAGI), and 295 to 298 (NKWD). A KH-like domain is found at 353-437 (KRITTGLLNN…PIVISTKKRG (85 aa)).

It belongs to the TRAFAC class TrmE-Era-EngA-EngB-Septin-like GTPase superfamily. EngA (Der) GTPase family. Associates with the 50S ribosomal subunit.

GTPase that plays an essential role in the late steps of ribosome biogenesis. This is GTPase Der from Thermoanaerobacter sp. (strain X514).